The primary structure comprises 422 residues: Telomerase-associated protein of 50 kDa (422 aa).

As to quaternary structure, component of the telomerase holoenzyme complex, composed of the catalytic core (the catalytic subunit TERT, the telomerase RNA template component TER and TAP65/p65), which is associated with two heterotrimeric subcomplexes: (i) the replication protein A (RPA)-related subcomplex, composed of TEB1, RPA2/TEB2 and RPA3/TEB3 and (ii) the CST-like subcomplex, composed of TAP75/p75, TAP45/p45 and TAP19/p19. TEB1 and the CST-like subcomplex are tethered to the catalytic core by TAP50/p50.

Its subcellular location is the chromosome. The protein localises to the telomere. Its function is as follows. Tethering component of the holoenzyme telomerase ribonucleoprotein (RNP) complex. Telomerase is an essential ribonucleoprotein enzyme that copies new telomeric repeats onto chromosome ends by repetitively synthesizing the short telomere-repeat sequence 5'-TTGGGG-3' using an RNA template component TER. In the telomerase holoenzyme complex, acts as a hub that anchors the two heterotrimeric subcomplexes with the catalytic core. This is Telomerase-associated protein of 50 kDa from Tetrahymena thermophila (strain SB210).